The primary structure comprises 180 residues: MSNGIVAKRYAVALFKIAKEKHVLEMFEEELRLVQNVYVKNGELHSFLTQPNISKEQKKTFLANVFGSVSESILNTLYILIDNKRIDILPEIADEYVVLANEERNVADATVYSIRLLSEEEKLNIAEAFAKRTGKDAIRVKNVVDEDLLGGIKVRIGNRIYDGSLQGKLARIQRELMKNR.

The protein belongs to the ATPase delta chain family. In terms of assembly, F-type ATPases have 2 components, F(1) - the catalytic core - and F(0) - the membrane proton channel. F(1) has five subunits: alpha(3), beta(3), gamma(1), delta(1), epsilon(1). F(0) has three main subunits: a(1), b(2) and c(10-14). The alpha and beta chains form an alternating ring which encloses part of the gamma chain. F(1) is attached to F(0) by a central stalk formed by the gamma and epsilon chains, while a peripheral stalk is formed by the delta and b chains.

It is found in the cell membrane. Its function is as follows. F(1)F(0) ATP synthase produces ATP from ADP in the presence of a proton or sodium gradient. F-type ATPases consist of two structural domains, F(1) containing the extramembraneous catalytic core and F(0) containing the membrane proton channel, linked together by a central stalk and a peripheral stalk. During catalysis, ATP synthesis in the catalytic domain of F(1) is coupled via a rotary mechanism of the central stalk subunits to proton translocation. This protein is part of the stalk that links CF(0) to CF(1). It either transmits conformational changes from CF(0) to CF(1) or is implicated in proton conduction. In Bacillus cereus (strain G9842), this protein is ATP synthase subunit delta.